Consider the following 228-residue polypeptide: Protein-L-isoaspartate O-methyltransferase (228 aa).

The segment at 1 to 20 (MVAVSLKMSQPAAPPPPMGE) is disordered. Residue Ser-76 is part of the active site.

Belongs to the methyltransferase superfamily. L-isoaspartyl/D-aspartyl protein methyltransferase family.

Its subcellular location is the cytoplasm. The catalysed reaction is [protein]-L-isoaspartate + S-adenosyl-L-methionine = [protein]-L-isoaspartate alpha-methyl ester + S-adenosyl-L-homocysteine. Catalyzes the methyl esterification of L-isoaspartyl residues in peptides and proteins that result from spontaneous decomposition of normal L-aspartyl and L-asparaginyl residues. It plays a role in the repair and/or degradation of damaged proteins. The polypeptide is Protein-L-isoaspartate O-methyltransferase (Magnetococcus marinus (strain ATCC BAA-1437 / JCM 17883 / MC-1)).